A 230-amino-acid polypeptide reads, in one-letter code: Putative transcription factor bHLH107 (230 aa).

Positions 44 to 93 (ASLRNHKEAERKRRARINSHLNKLRKLLSCNSKTDKSTLLAKVVQRVKEL) constitute a bHLH domain.

In terms of assembly, homodimer.

It is found in the nucleus. The chain is Putative transcription factor bHLH107 (BHLH107) from Arabidopsis thaliana (Mouse-ear cress).